The following is a 125-amino-acid chain: Fluoride-specific ion channel FluC (125 aa).

4 consecutive transmembrane segments (helical) span residues 1–21 (MIQALLVAVGGAIGSVLRYFV), 32–52 (AFPWGTLAVNVVGCFVIGVFA), 68–88 (LLITGFLGGFTTFSAFSLDAI), and 101–121 (IYIAASVGLSMAAVFAGLAIM). Na(+) is bound by residues Gly75 and Thr78.

The protein belongs to the fluoride channel Fluc/FEX (TC 1.A.43) family.

It localises to the cell inner membrane. The catalysed reaction is fluoride(in) = fluoride(out). With respect to regulation, na(+) is not transported, but it plays an essential structural role and its presence is essential for fluoride channel function. In terms of biological role, fluoride-specific ion channel. Important for reducing fluoride concentration in the cell, thus reducing its toxicity. In Rhizobium etli (strain ATCC 51251 / DSM 11541 / JCM 21823 / NBRC 15573 / CFN 42), this protein is Fluoride-specific ion channel FluC.